A 185-amino-acid polypeptide reads, in one-letter code: uncharacterized protein (185 aa).

Transmembrane regions (helical) follow at residues methionine 1–glutamate 21 and phenylalanine 111–tryptophan 131.

This sequence to A.aeolicus aq_1900.

It is found in the cell membrane. This is an uncharacterized protein from Aquifex aeolicus (strain VF5).